The following is a 310-amino-acid chain: Methionyl-tRNA formyltransferase (310 aa).

112–115 (SLLP) provides a ligand contact to (6S)-5,6,7,8-tetrahydrofolate.

This sequence belongs to the Fmt family.

It catalyses the reaction L-methionyl-tRNA(fMet) + (6R)-10-formyltetrahydrofolate = N-formyl-L-methionyl-tRNA(fMet) + (6S)-5,6,7,8-tetrahydrofolate + H(+). Its function is as follows. Attaches a formyl group to the free amino group of methionyl-tRNA(fMet). The formyl group appears to play a dual role in the initiator identity of N-formylmethionyl-tRNA by promoting its recognition by IF2 and preventing the misappropriation of this tRNA by the elongation apparatus. The protein is Methionyl-tRNA formyltransferase of Pelagibacter ubique (strain HTCC1062).